A 105-amino-acid chain; its full sequence is UPF0235 protein A1C_06510 (105 aa).

It belongs to the UPF0235 family.

The sequence is that of UPF0235 protein A1C_06510 from Rickettsia akari (strain Hartford).